We begin with the raw amino-acid sequence, 445 residues long: Alkylglycerol monooxygenase (445 aa).

Transmembrane regions (helical) follow at residues alanine 43–glycine 63 and tryptophan 111–phenylalanine 131. Positions alanine 120 to threonine 249 constitute a Fatty acid hydroxylase domain. The Histidine box-1 motif lies at histidine 132 to histidine 136. The short motif at histidine 145–histidine 149 is the Histidine box-2 element. The Histidine box-3 signature appears at histidine 221–histidine 225. 3 helical membrane-spanning segments follow: residues leucine 334–phenylalanine 354, valine 363–leucine 383, and valine 413–valine 433.

It belongs to the sterol desaturase family. TMEM195 subfamily. The cofactor is Fe cation.

It localises to the endoplasmic reticulum membrane. It catalyses the reaction 1-O-(1,2-saturated-alkyl)-sn-glycerol + (6R)-L-erythro-5,6,7,8-tetrahydrobiopterin + O2 = a 1-(1-hydroxyalkyl)-sn-glycerol + (6R)-L-erythro-6,7-dihydrobiopterin + H2O. Functionally, glyceryl-ether monooxygenase that cleaves the O-alkyl bond of ether lipids. Ether lipids are essential components of brain membranes. The sequence is that of Alkylglycerol monooxygenase (AGMO) from Homo sapiens (Human).